Here is an 89-residue protein sequence, read N- to C-terminus: Small ribosomal subunit protein uS15 (89 aa).

Residues Met-1–Gly-23 form a disordered region. The span at Asn-10–Gly-23 shows a compositional bias: polar residues.

This sequence belongs to the universal ribosomal protein uS15 family. As to quaternary structure, part of the 30S ribosomal subunit. Forms a bridge to the 50S subunit in the 70S ribosome, contacting the 23S rRNA.

In terms of biological role, one of the primary rRNA binding proteins, it binds directly to 16S rRNA where it helps nucleate assembly of the platform of the 30S subunit by binding and bridging several RNA helices of the 16S rRNA. Functionally, forms an intersubunit bridge (bridge B4) with the 23S rRNA of the 50S subunit in the ribosome. The protein is Small ribosomal subunit protein uS15 of Prochlorococcus marinus (strain NATL2A).